Consider the following 133-residue polypeptide: Cytidine deaminase (133 aa).

The 129-residue stretch at Val3–Tyr131 folds into the CMP/dCMP-type deaminase domain. Asn43–Glu45 contacts substrate. Cys54 contacts Zn(2+). Glu56 (proton donor) is an active-site residue. Zn(2+)-binding residues include Cys89 and Cys92.

This sequence belongs to the cytidine and deoxycytidylate deaminase family. In terms of assembly, homodimer. Requires Zn(2+) as cofactor.

The enzyme catalyses cytidine + H2O + H(+) = uridine + NH4(+). It catalyses the reaction 2'-deoxycytidine + H2O + H(+) = 2'-deoxyuridine + NH4(+). This enzyme scavenges exogenous and endogenous cytidine and 2'-deoxycytidine for UMP synthesis. The polypeptide is Cytidine deaminase (cdd) (Mycoplasma pneumoniae (strain ATCC 29342 / M129 / Subtype 1) (Mycoplasmoides pneumoniae)).